The chain runs to 61 residues: Bactericidin B-5P (61 aa).

The N-terminal stretch at 1–22 (MNFSRVLFFVFACLSAFAMASA) is a signal peptide. A propeptide spans 23–24 (AP) (removed by a dipeptidylpeptidase). Residue Gly-60 is modified to Glycine amide.

Belongs to the cecropin family.

Its subcellular location is the secreted. Cecropins have lytic and antibacterial activity against several Gram-positive and Gram-negative bacteria. This Manduca sexta (Tobacco hawkmoth) protein is Bactericidin B-5P.